The following is a 302-amino-acid chain: Elongation factor Ts (302 aa).

The interval 82–85 (TDFV) is involved in Mg(2+) ion dislocation from EF-Tu.

It belongs to the EF-Ts family.

It localises to the cytoplasm. Associates with the EF-Tu.GDP complex and induces the exchange of GDP to GTP. It remains bound to the aminoacyl-tRNA.EF-Tu.GTP complex up to the GTP hydrolysis stage on the ribosome. The polypeptide is Elongation factor Ts (Nitrosospira multiformis (strain ATCC 25196 / NCIMB 11849 / C 71)).